Reading from the N-terminus, the 334-residue chain is Flavonol synthase/flavanone 3-hydroxylase (334 aa).

The region spanning 196–295 (DLVYLMKINY…RMSWPVFLEP (100 aa)) is the Fe2OG dioxygenase domain. Fe cation is bound by residues histidine 220, aspartate 222, and histidine 276.

The protein belongs to the iron/ascorbate-dependent oxidoreductase family. Requires Fe cation as cofactor. It depends on L-ascorbate as a cofactor.

Its subcellular location is the cytoplasm. It carries out the reaction a (2R,3R)-dihydroflavonol + 2-oxoglutarate + O2 = a flavonol + succinate + CO2 + H2O. It catalyses the reaction a (2S)-flavan-4-one + 2-oxoglutarate + O2 = a (2R,3R)-dihydroflavonol + succinate + CO2. It participates in secondary metabolite biosynthesis; flavonoid biosynthesis. Its function is as follows. Catalyzes the formation of flavonols from dihydroflavonols. It can act on dihydrokaempferol to produce kaempferol, on dihydroquercetin to produce quercitin and on dihydromyricetin to produce myricetin. The sequence is that of Flavonol synthase/flavanone 3-hydroxylase (FLS) from Eustoma exaltatum subsp. russellianum (Bluebells).